An 87-amino-acid chain; its full sequence is U15-lycotoxin-Ls1h (87 aa).

The signal sequence occupies residues 1–20; sequence MNSKIFAVLLLLGLLSCVLS. Positions 21 to 66 constitute a WAP domain; the sequence is DQYCPKSSITACKKMNTRNDCCKDDDCTGGSWCCATPCGNFCKYPT. Disulfide bonds link C24–C54, C32–C58, C41–C53, C42–C80, and C47–C62.

Belongs to the venom protein 11 family. 01 (wap-1) subfamily. In terms of processing, contains 5 disulfide bonds. Expressed by the venom gland.

Its subcellular location is the secreted. Has antibacterial activity. This chain is U15-lycotoxin-Ls1h, found in Lycosa singoriensis (Wolf spider).